A 291-amino-acid chain; its full sequence is uncharacterized protein (291 aa).

A disordered region spans residues threonine 77 to proline 140. The segment covering proline 125–proline 134 has biased composition (pro residues).

This is an uncharacterized protein from Synechocystis sp. (strain ATCC 27184 / PCC 6803 / Kazusa).